Here is an 89-residue protein sequence, read N- to C-terminus: Arminin 7591 (89 aa).

The signal sequence occupies residues 1-18 (MRSAFAVLFLALIAITYS). Residues 19 to 58 (KNYEDVKEEIKNEVENEILKDLEEDVNEFDDNVQEEVNDA) constitute a propeptide that is removed on maturation. Position 86 is a leucine amide (Leu-86).

This sequence belongs to the arminin family. Expressed in entodermal epithelium along the body column.

Its subcellular location is the secreted. The protein localises to the target cell membrane. Its function is as follows. Antimicrobial peptide with a broad-spectrum antimicrobial activity. Keeps its antibacterial activity under a wide range of salt concentrations that mimic physiological conditions of human blood, which is surprising, since Hydra is an obligate freshwater animal with nearly no salt tolerance. Does not affect red blood cells. The sequence is that of Arminin 7591 from Hydra vulgaris (Hydra).